A 133-amino-acid chain; its full sequence is Small ribosomal subunit protein eS8 (133 aa).

The interval 1 to 34 (MGVWHGRSLRKPTGGRIRPHRKKRKFEMGNPPTE) is disordered.

Belongs to the eukaryotic ribosomal protein eS8 family. As to quaternary structure, part of the 30S ribosomal subunit.

This chain is Small ribosomal subunit protein eS8, found in Methanopyrus kandleri (strain AV19 / DSM 6324 / JCM 9639 / NBRC 100938).